We begin with the raw amino-acid sequence, 390 residues long: tRNA (guanine(26)-N(2))-dimethyltransferase (390 aa).

A Trm1 methyltransferase domain is found at 4 to 378 (HIIEEGLVKI…MPLDELKQLI (375 aa)). 5 residues coordinate S-adenosyl-L-methionine: R37, R67, D85, D112, and A113. Residues C245, C248, C265, and C268 each coordinate Zn(2+).

The protein belongs to the class I-like SAM-binding methyltransferase superfamily. Trm1 family.

It carries out the reaction guanosine(26) in tRNA + 2 S-adenosyl-L-methionine = N(2)-dimethylguanosine(26) in tRNA + 2 S-adenosyl-L-homocysteine + 2 H(+). Its function is as follows. Dimethylates a single guanine residue at position 26 of a number of tRNAs using S-adenosyl-L-methionine as donor of the methyl groups. The sequence is that of tRNA (guanine(26)-N(2))-dimethyltransferase from Methanosphaera stadtmanae (strain ATCC 43021 / DSM 3091 / JCM 11832 / MCB-3).